The chain runs to 343 residues: tRNA-specific 2-thiouridylase MnmA (343 aa).

Residues 7-14 (ALSGGVDS) and Met33 each bind ATP. The Nucleophile role is filled by Cys87. A disulfide bridge connects residues Cys87 and Cys184. Residue Gly111 coordinates ATP. The tract at residues 135–137 (KDQ) is interaction with tRNA. The Cysteine persulfide intermediate role is filled by Cys184. The tract at residues 289 to 290 (RY) is interaction with tRNA.

Belongs to the MnmA/TRMU family.

Its subcellular location is the cytoplasm. The enzyme catalyses S-sulfanyl-L-cysteinyl-[protein] + uridine(34) in tRNA + AH2 + ATP = 2-thiouridine(34) in tRNA + L-cysteinyl-[protein] + A + AMP + diphosphate + H(+). Catalyzes the 2-thiolation of uridine at the wobble position (U34) of tRNA, leading to the formation of s(2)U34. The protein is tRNA-specific 2-thiouridylase MnmA of Desulforudis audaxviator (strain MP104C).